The primary structure comprises 791 residues: Probable phosphoketolase (791 aa).

This sequence belongs to the XFP family. The cofactor is thiamine diphosphate.

The protein is Probable phosphoketolase of Pseudomonas putida (strain ATCC 700007 / DSM 6899 / JCM 31910 / BCRC 17059 / LMG 24140 / F1).